We begin with the raw amino-acid sequence, 591 residues long: Probable LRR receptor-like serine/threonine-protein kinase At1g69990 (591 aa).

A signal peptide spans 1–18; it reads MKTISIFFVIILMSSSHA. Residues 19-218 lie on the Extracellular side of the membrane; the sequence is EDDVLCLKGF…GKNLTIIVTA (200 aa). Residue N46 is glycosylated (N-linked (GlcNAc...) asparagine). 5 LRR repeats span residues 66–88, 90–111, 115–137, 139–162, and 163–185; these read RILS…LKLC, SLQS…QICS, YLVT…IVDC, FLNS…TRLN, and RLQR…LSHY. N211 carries an N-linked (GlcNAc...) asparagine glycan. A helical transmembrane segment spans residues 219–239; it reads GVIGAVGSLCVGFGMFWWFFI. Residues 240-591 are Cytoplasmic-facing; sequence RDRRKMNNYG…LIFNKQEHLK (352 aa). T292 carries the phosphothreonine modification. The Protein kinase domain occupies 295 to 573; it reads FDSGNIVVSS…KNLGDQHGFF (279 aa). ATP is bound by residues 301–309 and K323; that span reads VVSSRSGVS. S378 bears the Phosphoserine mark. Phosphothreonine is present on T389. Y463 carries the phosphotyrosine modification. S465 is subject to Phosphoserine. T466 carries the phosphothreonine modification. S470 carries the phosphoserine modification.

It belongs to the protein kinase superfamily. Ser/Thr protein kinase family.

Its subcellular location is the membrane. It catalyses the reaction L-seryl-[protein] + ATP = O-phospho-L-seryl-[protein] + ADP + H(+). It carries out the reaction L-threonyl-[protein] + ATP = O-phospho-L-threonyl-[protein] + ADP + H(+). The polypeptide is Probable LRR receptor-like serine/threonine-protein kinase At1g69990 (Arabidopsis thaliana (Mouse-ear cress)).